Here is a 679-residue protein sequence, read N- to C-terminus: Cysteine-rich receptor-like protein kinase 29 (679 aa).

Positions 1 to 23 are cleaved as a signal peptide; the sequence is MEHVRVIFFFACFLTLAPFHAFA. At 24–286 the chain is on the extracellular side; the sequence is QVDSYEFDPD…RTGKGKGGSK (263 aa). 2 consecutive Gnk2-homologous domains span residues 30 to 134 and 140 to 249; these read FDPD…NRTI and TNPT…TWRF. 6 N-linked (GlcNAc...) asparagine glycosylation sites follow: asparagine 41, asparagine 45, asparagine 71, asparagine 107, asparagine 131, and asparagine 187. Residues 260–281 are disordered; that stretch reads PPAIQPADSPQSAARTERTGKG. A helical membrane pass occupies residues 287 to 307; sequence VIIAIVIPILLVALLAICLCL. Topologically, residues 308–679 are cytoplasmic; it reads VLKWRKNKSG…DVTVSEFSPR (372 aa). The 281-residue stretch at 357 to 637 folds into the Protein kinase domain; the sequence is FSSENELGRG…SLMLNSYSFT (281 aa). ATP-binding positions include 363 to 371 and lysine 385; that span reads LGRGGFGSV. Phosphotyrosine is present on tyrosine 430. Aspartate 482 (proton acceptor) is an active-site residue. Phosphoserine is present on serine 486. Position 524 is a phosphothreonine (threonine 524). Tyrosine 532 is modified (phosphotyrosine). The disordered stretch occupies residues 659–679; the sequence is SSTEGLQMSSNDVTVSEFSPR.

This sequence belongs to the protein kinase superfamily. Ser/Thr protein kinase family. CRK subfamily.

It is found in the membrane. The enzyme catalyses L-seryl-[protein] + ATP = O-phospho-L-seryl-[protein] + ADP + H(+). It carries out the reaction L-threonyl-[protein] + ATP = O-phospho-L-threonyl-[protein] + ADP + H(+). This chain is Cysteine-rich receptor-like protein kinase 29 (CRK29), found in Arabidopsis thaliana (Mouse-ear cress).